The chain runs to 321 residues: Probable membrane-associated kinase regulator 3 (321 aa).

Over residues 297–314 (KSNVTESELCSSRTSVST) the composition is skewed to polar residues. The interval 297–321 (KSNVTESELCSSRTSVSTCGDLDKD) is disordered.

The protein localises to the cell membrane. This chain is Probable membrane-associated kinase regulator 3 (MAKR3), found in Arabidopsis thaliana (Mouse-ear cress).